The sequence spans 869 residues: Iron-sulfur cluster assembly SufBD family protein ML0593 (869 aa).

In terms of domain architecture, DOD-type homing endonuclease spans 344–477; sequence LLGLWLGDGH…VRQLAIGCGL (134 aa).

It belongs to the iron-sulfur cluster assembly SufBD family. This protein undergoes a protein self splicing that involves a post-translational excision of the intervening region (intein) followed by peptide ligation.

The polypeptide is Iron-sulfur cluster assembly SufBD family protein ML0593 (Mycobacterium leprae (strain TN)).